Here is a 468-residue protein sequence, read N- to C-terminus: UDP-N-acetylmuramate--L-alanine ligase (468 aa).

An ATP-binding site is contributed by 114–120; it reads GTHGKTT.

The protein belongs to the MurCDEF family.

Its subcellular location is the cytoplasm. It catalyses the reaction UDP-N-acetyl-alpha-D-muramate + L-alanine + ATP = UDP-N-acetyl-alpha-D-muramoyl-L-alanine + ADP + phosphate + H(+). It functions in the pathway cell wall biogenesis; peptidoglycan biosynthesis. Cell wall formation. The sequence is that of UDP-N-acetylmuramate--L-alanine ligase from Methylobacterium radiotolerans (strain ATCC 27329 / DSM 1819 / JCM 2831 / NBRC 15690 / NCIMB 10815 / 0-1).